The following is a 138-amino-acid chain: Acidic phospholipase A2 BE-I-PLA2 (138 aa).

An N-terminal signal peptide occupies residues 1–16; it reads MRTLWIMAVLLVGVEG. 7 disulfides stabilise this stretch: cysteine 42-cysteine 131, cysteine 44-cysteine 60, cysteine 59-cysteine 111, cysteine 65-cysteine 138, cysteine 66-cysteine 104, cysteine 73-cysteine 97, and cysteine 91-cysteine 102. The Ca(2+) site is built by tyrosine 43, glycine 45, and glycine 47. Residue histidine 63 is part of the active site. Residue aspartate 64 coordinates Ca(2+). The active site involves aspartate 105.

It belongs to the phospholipase A2 family. Group II subfamily. D49 sub-subfamily. Requires Ca(2+) as cofactor. Expressed by the venom gland.

Its subcellular location is the secreted. It catalyses the reaction a 1,2-diacyl-sn-glycero-3-phosphocholine + H2O = a 1-acyl-sn-glycero-3-phosphocholine + a fatty acid + H(+). Its function is as follows. Snake venom phospholipase A2 that shows a potent inhibition of human platelet aggregation. This inhibition is concentration-dependent when aggregation is induced by collagen, and concentration-independent when aggregation is induced by arachidonic acid. In human umbilical-cord vein endothelial cells, this toxin stimulates endothelial cells to release prostaglandin I(2), suggesting an increase of its potential anti-platelet activity in vivo. PLA2 catalyzes the calcium-dependent hydrolysis of the 2-acyl groups in 3-sn-phosphoglycerides. In Bothrops erythromelas (Caatinga lance head), this protein is Acidic phospholipase A2 BE-I-PLA2.